Consider the following 95-residue polypeptide: Neutrophil antibiotic peptide NP-4 (95 aa).

Residues 1–19 (MRTLALLAAILLVTLQAQA) form the signal peptide. The propeptide occupies 20-62 (ELHSGMADDGVDQQQPRAQDLDVAVYIKQDETSPLEVLGAKAG). 3 cysteine pairs are disulfide-bonded: cysteine 65/cysteine 93, cysteine 67/cysteine 82, and cysteine 72/cysteine 92.

It belongs to the alpha-defensin family.

It is found in the secreted. Functionally, microbicidal activity. This is Neutrophil antibiotic peptide NP-4 from Oryctolagus cuniculus (Rabbit).